We begin with the raw amino-acid sequence, 254 residues long: Bidirectional sugar transporter SWEET6b (254 aa).

The Extracellular portion of the chain corresponds to 1-9 (MISPDAARN). A helical transmembrane segment spans residues 10–30 (VVGIIGNVISFGLFLAPVPTF). The MtN3/slv 1 domain maps to 10-98 (VVGIIGNVIS…IFFLYSPNKK (89 aa)). Residues 31 to 45 (WRICKRKDVEEFKAD) are Cytoplasmic-facing. Residues 46 to 66 (PYLATLLNCMLWVFYGIPIVH) traverse the membrane as a helical segment. Over 67-69 (PNS) the chain is Extracellular. Residues 70–90 (ILVVTINGIGLVVEGTYLFIF) traverse the membrane as a helical segment. Over 91 to 101 (FLYSPNKKRLR) the chain is Cytoplasmic. Residues 102–122 (MLAVLGVELVFMLAVILGVLL) traverse the membrane as a helical segment. Residues 123-131 (GAHTHKKRS) lie on the Extracellular side of the membrane. A helical membrane pass occupies residues 132 to 152 (MIVGILCVFFGSIMYFSPLTI). One can recognise a MtN3/slv 2 domain in the interval 133 to 216 (IVGILCVFFG…LILYACYYRT (84 aa)). Residues 153–165 (MGKVIKTKSVEYM) are Cytoplasmic-facing. Residues 166-186 (PFFLSLVCFLNGVCWTAYALI) form a helical membrane-spanning segment. Over 187–189 (RFD) the chain is Extracellular. The chain crosses the membrane as a helical span at residues 190–210 (IYVTIPNSLGAIFGAIQLILY). Residues 211–254 (ACYYRTTPKKTKAAKDVEMPSVISGPGAAATASGGSVVSVTVER) lie on the Cytoplasmic side of the membrane.

This sequence belongs to the SWEET sugar transporter family. As to quaternary structure, forms homooligomers and/or heterooligomers.

The protein resides in the cell membrane. Functionally, mediates both low-affinity uptake and efflux of sugar across the plasma membrane. This Oryza sativa subsp. indica (Rice) protein is Bidirectional sugar transporter SWEET6b (SWEET6B).